Reading from the N-terminus, the 430-residue chain is Dihydroorotase (430 aa).

The Zn(2+) site is built by H60 and H62. Substrate is bound by residues H62 to R64 and N94. Residues D151, H178, and H231 each contribute to the Zn(2+) site. A substrate-binding site is contributed by N277. D304 is a Zn(2+) binding site. D304 is a catalytic residue. Substrate is bound by residues H308 and F322 to G323.

Belongs to the metallo-dependent hydrolases superfamily. DHOase family. Class I DHOase subfamily. Requires Zn(2+) as cofactor.

It carries out the reaction (S)-dihydroorotate + H2O = N-carbamoyl-L-aspartate + H(+). Its pathway is pyrimidine metabolism; UMP biosynthesis via de novo pathway; (S)-dihydroorotate from bicarbonate: step 3/3. Its function is as follows. Catalyzes the reversible cyclization of carbamoyl aspartate to dihydroorotate. This Carboxydothermus hydrogenoformans (strain ATCC BAA-161 / DSM 6008 / Z-2901) protein is Dihydroorotase.